Consider the following 172-residue polypeptide: UPF0102 protein Pcryo_2198 (172 aa).

It belongs to the UPF0102 family.

This chain is UPF0102 protein Pcryo_2198, found in Psychrobacter cryohalolentis (strain ATCC BAA-1226 / DSM 17306 / VKM B-2378 / K5).